The chain runs to 185 residues: Ribose 1,5-bisphosphate phosphokinase PhnN (185 aa).

10–17 (GPSGSGKD) is an ATP binding site.

This sequence belongs to the ribose 1,5-bisphosphokinase family.

It carries out the reaction alpha-D-ribose 1,5-bisphosphate + ATP = 5-phospho-alpha-D-ribose 1-diphosphate + ADP. Its pathway is metabolic intermediate biosynthesis; 5-phospho-alpha-D-ribose 1-diphosphate biosynthesis; 5-phospho-alpha-D-ribose 1-diphosphate from D-ribose 5-phosphate (route II): step 3/3. Catalyzes the phosphorylation of ribose 1,5-bisphosphate to 5-phospho-D-ribosyl alpha-1-diphosphate (PRPP). Accepts ATP but not GTP as a phosphoryl donor, and uses ribose 1,5-bisphosphate but not ribose, ribose 1-phosphate, or ribose 5-phosphate as a phosphoryl acceptor. The protein is Ribose 1,5-bisphosphate phosphokinase PhnN (phnN) of Escherichia coli (strain K12).